The primary structure comprises 365 residues: Cobalt-precorrin-5B C(1)-methyltransferase (365 aa).

This sequence belongs to the CbiD family.

It catalyses the reaction Co-precorrin-5B + S-adenosyl-L-methionine = Co-precorrin-6A + S-adenosyl-L-homocysteine. The protein operates within cofactor biosynthesis; adenosylcobalamin biosynthesis; cob(II)yrinate a,c-diamide from sirohydrochlorin (anaerobic route): step 6/10. In terms of biological role, catalyzes the methylation of C-1 in cobalt-precorrin-5B to form cobalt-precorrin-6A. This chain is Cobalt-precorrin-5B C(1)-methyltransferase, found in Methanococcus maripaludis (strain DSM 14266 / JCM 13030 / NBRC 101832 / S2 / LL).